A 447-amino-acid chain; its full sequence is ATP synthase subunit beta (447 aa).

An ATP-binding site is contributed by 147-154 (GGAGVGKT).

Belongs to the ATPase alpha/beta chains family. F-type ATPases have 2 components, CF(1) - the catalytic core - and CF(0) - the membrane proton channel. CF(1) has five subunits: alpha(3), beta(3), gamma(1), delta(1), epsilon(1). CF(0) has three main subunits: a(1), b(2) and c(9-12). The alpha and beta chains form an alternating ring which encloses part of the gamma chain. CF(1) is attached to CF(0) by a central stalk formed by the gamma and epsilon chains, while a peripheral stalk is formed by the delta and b chains.

Its subcellular location is the cell membrane. The catalysed reaction is ATP + H2O + 4 H(+)(in) = ADP + phosphate + 5 H(+)(out). Its function is as follows. Produces ATP from ADP in the presence of a proton gradient across the membrane. The catalytic sites are hosted primarily by the beta subunits. The protein is ATP synthase subunit beta of Carsonella ruddii (strain PV).